Reading from the N-terminus, the 33-residue chain is Mu/omega-theraphotoxin-Tap2a (33 aa).

Cystine bridges form between cysteine 2/cysteine 17, cysteine 9/cysteine 22, and cysteine 16/cysteine 29.

Belongs to the neurotoxin 10 (Hwtx-1) family. 59 (Tltx) subfamily. In terms of tissue distribution, expressed by the venom gland.

The protein resides in the secreted. Functionally, gating-modifier toxin that inhibits both sodium (Nav) and calcium (Cav3) channels by inducing hyperpolarizing shift in voltage-dependence of activation and steady state inactivation. Inhibits Nav1.1/SCN1A, Nav1.2/SCN2A, Nav1.6/SCN6A, Nav1.7/SCN9A and Cav3.1/CACNA1G sodium and calcium channels at nanomolar concentrations (IC(50)=169-621 nM). Surprisingly, selectively slows fast inactivation of Nav1.3/SCN3A. Also shows moderate inhibition of Nav1.3/SCN3A sodium channels (IC(50)=1216 nM). This is Mu/omega-theraphotoxin-Tap2a from Theraphosa apophysis (Goliath pinkfoot tarantula).